We begin with the raw amino-acid sequence, 229 residues long: MEGLTDRQLEVLRFIASQIEDHGYPPTIREIGEALDIRSTNGVNDHLKALERKGYLSRDPVKSRALIPTSAAREALGGGGEAGSNVVPLVRGPARPGSRMIEIPIVGRVAAGMPILAQERVEDTVQVDAFLLGTNKKVYGLRVQGDSMIGDGILPGDYVFVKKQLNADDGEIVVAMIDDEATVKRVYFEGDRVRFQPSNPRMAPIYVRHSDFRSTMILGVVVGVYRKLT.

A DNA-binding region (H-T-H motif) is located at residues 28–48 (IREIGEALDIRSTNGVNDHLK). Residues S147 and K184 each act as for autocatalytic cleavage activity in the active site.

The protein belongs to the peptidase S24 family. As to quaternary structure, homodimer.

The enzyme catalyses Hydrolysis of Ala-|-Gly bond in repressor LexA.. Functionally, represses a number of genes involved in the response to DNA damage (SOS response), including recA and lexA. In the presence of single-stranded DNA, RecA interacts with LexA causing an autocatalytic cleavage which disrupts the DNA-binding part of LexA, leading to derepression of the SOS regulon and eventually DNA repair. In Anaeromyxobacter dehalogenans (strain 2CP-C), this protein is LexA repressor.